The chain runs to 318 residues: Forkhead box protein I2 (318 aa).

Residues 1–30 (MATYCDDLGPSSAPPGQAQATAHPPGYEPG) form a disordered region. Residues 102–196 (RPPYSYSALI…DNGNFRRKRK (95 aa)) constitute a DNA-binding region (fork-head).

It is found in the nucleus. Functionally, possible transcriptional activator. The sequence is that of Forkhead box protein I2 (FOXI2) from Homo sapiens (Human).